An 874-amino-acid polypeptide reads, in one-letter code: Leucine--tRNA ligase (874 aa).

Positions Pro47–His57 match the 'HIGH' region motif. Positions Lys636–Ser640 match the 'KMSKS' region motif. ATP is bound at residue Lys639.

The protein belongs to the class-I aminoacyl-tRNA synthetase family.

The protein resides in the cytoplasm. It catalyses the reaction tRNA(Leu) + L-leucine + ATP = L-leucyl-tRNA(Leu) + AMP + diphosphate. The polypeptide is Leucine--tRNA ligase (Acinetobacter baumannii (strain AB307-0294)).